Consider the following 192-residue polypeptide: Small ribosomal subunit protein bS16 (192 aa).

The segment covering 149-161 (EKKAAEAKAKAEA) has biased composition (basic and acidic residues). Positions 149 to 192 (EKKAAEAKAKAEAEAAAAAEEATETEETPMEAAAEEAPAAESAE) are disordered. A compositionally biased stretch (low complexity) spans 178-192 (MEAAAEEAPAAESAE).

The protein belongs to the bacterial ribosomal protein bS16 family.

In Porphyromonas gingivalis (strain ATCC 33277 / DSM 20709 / CIP 103683 / JCM 12257 / NCTC 11834 / 2561), this protein is Small ribosomal subunit protein bS16.